The sequence spans 199 residues: V-type ATP synthase subunit E (199 aa).

The protein belongs to the V-ATPase E subunit family.

Produces ATP from ADP in the presence of a proton gradient across the membrane. This Borreliella afzelii (strain PKo) (Borrelia afzelii) protein is V-type ATP synthase subunit E.